We begin with the raw amino-acid sequence, 371 residues long: Protein maelstrom 1 (371 aa).

A DNA-binding region (HMG box) is located at residues Ala2 to Arg68.

The protein belongs to the maelstrom family.

The protein resides in the cytoplasm. It localises to the nucleus. Its function is as follows. Involved both in the piRNA and miRNA metabolic processes. As a component of the meiotic nuage, plays a central role during oogenesis by repressing transposable elements and preventing their mobilization, which is essential for the germline integrity. Repression of transposable elements is mediated via the piRNA metabolic process, which mediates the repression of transposable elements during meiosis by forming complexes composed of piRNAs and Piwi proteins and governs the repression of transposons. As a nuclear component, it is required for proper differentiation in the germline stem cell (GSC) lineage by repressing microRNA-7 (miR-7), thereby acting as an indirect regulator of bag-of-marbles (Bam). Acts by binding to the promoter of miR-7 gene and repressing its expression; miR-7 repression alleviates the Bam repression by miR-7, thereby allowing differentiation in the germline stem cell (GSC) lineage. The protein is Protein maelstrom 1 (mael1) of Drosophila pseudoobscura pseudoobscura (Fruit fly).